We begin with the raw amino-acid sequence, 471 residues long: T-box transcription factor T (471 aa).

Residues 24-196 (LWTKFCSLTN…HNPFAKAFLD (173 aa)) constitute a DNA-binding region (T-box).

Developing notochord.

The protein localises to the nucleus. In terms of biological role, involved in the transcriptional regulation of genes required for mesoderm differentiation. The chain is T-box transcription factor T from Halocynthia roretzi (Sea squirt).